A 2238-amino-acid chain; its full sequence is Golgin subfamily A member 4 (2238 aa).

A disordered region spans residues 1 to 90; the sequence is MFKKLKQKIS…QTFAQKLQLR (90 aa). Ser10 carries the post-translational modification Phosphoserine. The span at 12–41 shows a compositional bias: low complexity; the sequence is EQQQLQQALAPAQASSSSSTPTRTRSRTSS. Residue Thr39 is modified to Phosphothreonine. Residue Ser41 is modified to Phosphoserine. 2 stretches are compositionally biased toward polar residues: residues 52–62 and 73–85; these read NRENASTQATK and SPSQ…TFAQ. 2 positions are modified to phosphoserine: Ser93 and Ser100. 3 disordered regions span residues 132 to 154, 1695 to 1744, and 1770 to 1789; these read AAAF…NSDG, LKER…SQDC, and LEQG…HRAL. Positions 154 to 224 are interaction with MACF1; it reads GLSREQLLQR…EELQMDQQAK (71 aa). Residues 156–2161 are a coiled coil; sequence SREQLLQRLR…RYEKNACAAT (2006 aa). A compositionally biased stretch (basic and acidic residues) spans 1695 to 1711; that stretch reads LKEREKQVHSLEDKLKN. One can recognise a GRIP domain in the interval 2178-2225; it reads LFGEPTEFEYLRKVMFEYMMGRETKTMAKVITTVLKFPDDQAQKILER.

In terms of assembly, homodimer. Interacts with GTP-bound ARL1 and ARL3. Interacts with MACF1. Directly interacts with TBC1D23. Interacts with FAM91A1; this interaction may be mediated by TBC1D23. Ubiquitous. Highly expressed in oligodendrocyte precursors, particularly at a stage just prior to myelination.

It localises to the cytoplasm. The protein localises to the golgi apparatus membrane. Its subcellular location is the golgi apparatus. It is found in the trans-Golgi network membrane. Functionally, involved in vesicular trafficking at the Golgi apparatus level. May play a role in delivery of transport vesicles containing GPI-linked proteins from the trans-Golgi network through its interaction with MACF1. Involved in endosome-to-Golgi trafficking. This is Golgin subfamily A member 4 (Golga4) from Mus musculus (Mouse).